The sequence spans 1077 residues: MSVYYIVLAGFLLFMALVPFNAGQQYIDDDIEVVSSCQNGYVQNAGCDQNSQVNIIITATLDGVVTALDGETGEMIWRYEDAPLLRGTLSTSDPIDIGGTSLQLMPTLDGRLFSYTHNTNLIEPLPITTDSLLESTIRLGQDAVAGGKSVTTKGFDLFTGEQKYECSMESCGPGDTETPKNPIILIRRTTNSIRAMDTLRGIERWNLSTAEIGVTLAGGITSPTLVSDVKILLQPPDGVIVAVDKYNREEWKTNVDGHIVSVWQVYGNQIGEISIFDPSNIFTTQYEVMQREQHNLQTQSSLLYMGTSNGFPFIIQSPKAKNNLKQRMNALPELSTMTELTNPRFCTANEETRSLAYNVKDETLRLVLHNAFRHSQSKAIEDKSLSGSSARRKLQIIASDTEVSAQRIGTENLRSTSVSKSGDYGYLVLESEPQRVKFKVNSPITLMQTIFSYIFNPTAVVSFLAGLIGVTVAVVYNKIAKSSPRMIEHLSSTESAETESASHRTRTTSFAPTDDEIERFVEEGSDLSTTPIGAIHRKPLMPIEKSNIETHTQPQIKPVQRLVKTDIDTDEDSFSNDEKKRLLRNRTISRSSLEGFTSRFANEFEVKKVIGHGGFGVVFRAQSITDMNEYAVKRIAVADNDKARNRVLREARALAMFDHPGIIRYFYAWEERPPKGFQEKEDENLLGKIKAEKLAKLHEIKKAKKHTSEGKRVRSADTASFAESFAMPPVVGNTTDAENSWSTSAKPQEVGAKRTTSESKLGLHGGSDRTTAELKEESVAFSESDEESDTTEDSSSSDESPSSSSGSSIDDEPKKYNSSSGGIEFVDGSDDVDNEAVKETKKEIAVIEELSIHNRAMIVETENQELEVRERNDTGDCAYLYIVMQLCAEKTLEDWIRRSKTMESRPLFTMKNWIKQLASGLEYLHNKGFIHRDLKPGNVFFSLDSTHGHQILKIGDLGLATKTDGAPKITVRQDSDSSAKHTKNVGTRSYMSPEQLKHQQYTEKVDIFALGLVATELIISFSTASERIHTFADFQKGDIPAILDNVPESRDFLLQLTSLEPSERPTAHEVATHKFLQ.

An N-terminal signal peptide occupies residues 1–23 (MSVYYIVLAGFLLFMALVPFNAG). The Lumenal portion of the chain corresponds to 24–453 (QQYIDDDIEV…ITLMQTIFSY (430 aa)). Asn206 carries an N-linked (GlcNAc...) asparagine glycan. A helical membrane pass occupies residues 454–474 (IFNPTAVVSFLAGLIGVTVAV). Residues 475–1077 (VYNKIAKSSP…HEVATHKFLQ (603 aa)) lie on the Cytoplasmic side of the membrane. The region spanning 604 to 1076 (FEVKKVIGHG…AHEVATHKFL (473 aa)) is the Protein kinase domain. Residues 610–618 (IGHGGFGVV) and Lys633 contribute to the ATP site. The segment at 727–834 (MPPVVGNTTD…FVDGSDDVDN (108 aa)) is disordered. Over residues 732 to 746 (GNTTDAENSWSTSAK) the composition is skewed to polar residues. A compositionally biased stretch (basic and acidic residues) spans 766–778 (GSDRTTAELKEES). Positions 783-796 (ESDEESDTTEDSSS) are enriched in acidic residues. Over residues 797 to 808 (SDESPSSSSGSS) the composition is skewed to low complexity. Asp933 (proton acceptor) is an active-site residue.

This sequence belongs to the protein kinase superfamily. Ser/Thr protein kinase family. GCN2 subfamily. As to quaternary structure, forms dimers with HSPA5/BIP in resting cells. Oligomerizes in ER-stressed cells. Autophosphorylated. Post-translationally, N-glycosylated. As to expression, expressed in intestinal cells.

It localises to the endoplasmic reticulum membrane. It catalyses the reaction L-seryl-[protein] + ATP = O-phospho-L-seryl-[protein] + ADP + H(+). The enzyme catalyses L-threonyl-[protein] + ATP = O-phospho-L-threonyl-[protein] + ADP + H(+). Perturbation in protein folding in the endoplasmic reticulum (ER) promotes reversible dissociation from HSPA5/BIP and oligomerization, resulting in transautophosphorylation and kinase activity induction. Its function is as follows. Phosphorylates the alpha subunit of eukaryotic translation-initiation factor 2 (eIF2alpha), leading to its inactivation and thus to a rapid reduction of translational initiation and repression of global protein synthesis. May phosphorylate eIF2alpha during hypoxia. Proposed to have a role in alleviating endoplasmic reticulum stress. In Caenorhabditis elegans, this protein is Eukaryotic translation initiation factor 2-alpha kinase pek-1 (pek-1).